The following is a 217-amino-acid chain: Glutathione S-transferase B (217 aa).

Residues 1 to 87 (PMTLGYWNIR…YIARKHNLCG (87 aa)) form the GST N-terminal domain. Glutathione-binding positions include 6–7 (YW), 45–49 (WLNEK), 58–59 (NL), and 71–72 (QS). The GST C-terminal domain maps to 89 to 207 (TEEETIRMDI…KSSRFLPKPL (119 aa)). Residue tyrosine 115 coordinates substrate.

It belongs to the GST superfamily. Mu family. Homodimer.

The protein resides in the cytoplasm. It catalyses the reaction RX + glutathione = an S-substituted glutathione + a halide anion + H(+). The enzyme catalyses prostaglandin A2 + glutathione = prostaglandin A2-S-(R)-glutathione. The catalysed reaction is prostaglandin J2 + glutathione = prostaglandin J2-S-(R)-glutathione. It carries out the reaction prostaglandin J2 + glutathione = prostaglandin J2-S-(S)-glutathione. It catalyses the reaction prostaglandin A2 + glutathione = prostaglandin A2-S-(S)-glutathione. The enzyme catalyses 11(S)-hydroxy-14(S),15(S)-epoxy-(5Z,8Z,12E)-eicosatrienoate + glutathione = (11S,15S)-dihydroxy-14(R)-S-glutathionyl-(5Z,8Z,12E)-eicosatrienoate. Conjugation of reduced glutathione to a wide number of exogenous and endogenous hydrophobic electrophiles. Involved in the formation of glutathione conjugates of both prostaglandin A2 (PGA2) and prostaglandin J2 (PGJ2). Participates in the formation of novel hepoxilin regioisomers. This chain is Glutathione S-transferase B (GSTM1), found in Cavia porcellus (Guinea pig).